Consider the following 65-residue polypeptide: Photosystem II reaction center protein J (65 aa).

A helical transmembrane segment spans residues 35–55; that stretch reads LWLVATAGGTAVIFVLGIFFY.

The protein belongs to the PsbJ family. In terms of assembly, PSII is composed of 1 copy each of membrane proteins PsbA, PsbB, PsbC, PsbD, PsbE, PsbF, PsbH, PsbI, PsbJ, PsbK, PsbL, PsbM, PsbT, PsbX, PsbY, Psb30/Ycf12, peripheral proteins PsbO, CyanoQ (PsbQ), PsbU, PsbV and a large number of cofactors. It forms dimeric complexes.

It localises to the cellular thylakoid membrane. Functionally, one of the components of the core complex of photosystem II (PSII). PSII is a light-driven water:plastoquinone oxidoreductase that uses light energy to abstract electrons from H(2)O, generating O(2) and a proton gradient subsequently used for ATP formation. It consists of a core antenna complex that captures photons, and an electron transfer chain that converts photonic excitation into a charge separation. This chain is Photosystem II reaction center protein J, found in Prochlorococcus marinus (strain NATL1A).